Consider the following 736-residue polypeptide: Epithelial splicing regulatory protein 2 (736 aa).

RRM domains follow at residues 224 to 301 (TVIR…KATG), 325 to 405 (MIIR…RSTA), and 659 to 736 (ALVR…ACCE).

This sequence belongs to the ESRP family.

Its subcellular location is the nucleus. MRNA splicing factor that regulates the formation of epithelial cell-specific isoforms. Specifically regulates the expression of FGFR2-IIIb, an epithelial cell-specific isoform of fgfr2. Acts by directly binding specific sequences in mRNAs. Binds the GU-rich sequence motifs in the ISE/ISS-3, a cis-element regulatory region present in the mRNA of fgfr2. This Danio rerio (Zebrafish) protein is Epithelial splicing regulatory protein 2 (esrp2).